Reading from the N-terminus, the 227-residue chain is Pyridoxine/pyridoxamine 5'-phosphate oxidase (227 aa).

Residues 23–26 (RREY) and K81 each bind substrate. FMN contacts are provided by residues 76–81 (RIVLLK), 91–92 (YT), R97, K98, and Q120. The substrate site is built by Y138, R142, and S146. Residues 155-156 (QS) and W200 contribute to the FMN site. 206–208 (RLH) is a binding site for substrate. Residue R210 participates in FMN binding.

The protein belongs to the pyridoxamine 5'-phosphate oxidase family. Homodimer. Requires FMN as cofactor.

The catalysed reaction is pyridoxamine 5'-phosphate + O2 + H2O = pyridoxal 5'-phosphate + H2O2 + NH4(+). It catalyses the reaction pyridoxine 5'-phosphate + O2 = pyridoxal 5'-phosphate + H2O2. The protein operates within cofactor metabolism; pyridoxal 5'-phosphate salvage; pyridoxal 5'-phosphate from pyridoxamine 5'-phosphate: step 1/1. It functions in the pathway cofactor metabolism; pyridoxal 5'-phosphate salvage; pyridoxal 5'-phosphate from pyridoxine 5'-phosphate: step 1/1. In terms of biological role, catalyzes the oxidation of either pyridoxine 5'-phosphate (PNP) or pyridoxamine 5'-phosphate (PMP) into pyridoxal 5'-phosphate (PLP). This is Pyridoxine/pyridoxamine 5'-phosphate oxidase from Pectobacterium atrosepticum (strain SCRI 1043 / ATCC BAA-672) (Erwinia carotovora subsp. atroseptica).